Reading from the N-terminus, the 159-residue chain is Ribosomal RNA large subunit methyltransferase H (159 aa).

Residues leucine 76, glycine 108, and 127-132 (FSKMTF) each bind S-adenosyl-L-methionine.

It belongs to the RNA methyltransferase RlmH family. As to quaternary structure, homodimer.

It is found in the cytoplasm. The enzyme catalyses pseudouridine(1915) in 23S rRNA + S-adenosyl-L-methionine = N(3)-methylpseudouridine(1915) in 23S rRNA + S-adenosyl-L-homocysteine + H(+). In terms of biological role, specifically methylates the pseudouridine at position 1915 (m3Psi1915) in 23S rRNA. In Exiguobacterium sibiricum (strain DSM 17290 / CCUG 55495 / CIP 109462 / JCM 13490 / 255-15), this protein is Ribosomal RNA large subunit methyltransferase H.